The primary structure comprises 391 residues: UPF0229 protein CLL_A3091 (391 aa).

2 disordered regions span residues 1–23 and 75–107; these read MAIF…DKRR and VATG…GNEE. Positions 80-92 are enriched in basic and acidic residues; the sequence is GEEKRGDKIESGS.

This sequence belongs to the UPF0229 family.

The polypeptide is UPF0229 protein CLL_A3091 (Clostridium botulinum (strain Eklund 17B / Type B)).